The primary structure comprises 616 residues: Dihydroxy-acid dehydratase (616 aa).

Mg(2+) is bound at residue aspartate 81. [2Fe-2S] cluster is bound at residue cysteine 122. Aspartate 123 and lysine 124 together coordinate Mg(2+). Lysine 124 carries the N6-carboxylysine modification. A [2Fe-2S] cluster-binding site is contributed by cysteine 195. Glutamate 491 is a binding site for Mg(2+). Serine 517 (proton acceptor) is an active-site residue.

It belongs to the IlvD/Edd family. In terms of assembly, homodimer. [2Fe-2S] cluster is required as a cofactor. Mg(2+) serves as cofactor.

It carries out the reaction (2R)-2,3-dihydroxy-3-methylbutanoate = 3-methyl-2-oxobutanoate + H2O. The enzyme catalyses (2R,3R)-2,3-dihydroxy-3-methylpentanoate = (S)-3-methyl-2-oxopentanoate + H2O. Its pathway is amino-acid biosynthesis; L-isoleucine biosynthesis; L-isoleucine from 2-oxobutanoate: step 3/4. It functions in the pathway amino-acid biosynthesis; L-valine biosynthesis; L-valine from pyruvate: step 3/4. Its function is as follows. Functions in the biosynthesis of branched-chain amino acids. Catalyzes the dehydration of (2R,3R)-2,3-dihydroxy-3-methylpentanoate (2,3-dihydroxy-3-methylvalerate) into 2-oxo-3-methylpentanoate (2-oxo-3-methylvalerate) and of (2R)-2,3-dihydroxy-3-methylbutanoate (2,3-dihydroxyisovalerate) into 2-oxo-3-methylbutanoate (2-oxoisovalerate), the penultimate precursor to L-isoleucine and L-valine, respectively. This is Dihydroxy-acid dehydratase from Salmonella dublin (strain CT_02021853).